The following is a 564-amino-acid chain: Urease subunit alpha (564 aa).

A Urease domain is found at 126-564 (GGIDTHIHFI…LPMAQRYFLF (439 aa)). Ni(2+) is bound by residues histidine 131, histidine 133, and lysine 214. Residue lysine 214 is modified to N6-carboxylysine. Histidine 216 provides a ligand contact to substrate. 2 residues coordinate Ni(2+): histidine 243 and histidine 269. Histidine 317 functions as the Proton donor in the catalytic mechanism. Residue aspartate 357 participates in Ni(2+) binding.

The protein belongs to the metallo-dependent hydrolases superfamily. Urease alpha subunit family. In terms of assembly, heterotrimer of UreA (gamma), UreB (beta) and UreC (alpha) subunits. Three heterotrimers associate to form the active enzyme. It depends on Ni cation as a cofactor. In terms of processing, carboxylation allows a single lysine to coordinate two nickel ions.

It is found in the cytoplasm. It catalyses the reaction urea + 2 H2O + H(+) = hydrogencarbonate + 2 NH4(+). It functions in the pathway nitrogen metabolism; urea degradation; CO(2) and NH(3) from urea (urease route): step 1/1. The chain is Urease subunit alpha from Burkholderia pseudomallei (strain 1710b).